The sequence spans 327 residues: Phenylalanine--tRNA ligase alpha subunit (327 aa).

Position 252 (Glu252) interacts with Mg(2+).

The protein belongs to the class-II aminoacyl-tRNA synthetase family. Phe-tRNA synthetase alpha subunit type 1 subfamily. Tetramer of two alpha and two beta subunits. It depends on Mg(2+) as a cofactor.

Its subcellular location is the cytoplasm. It catalyses the reaction tRNA(Phe) + L-phenylalanine + ATP = L-phenylalanyl-tRNA(Phe) + AMP + diphosphate + H(+). The chain is Phenylalanine--tRNA ligase alpha subunit from Proteus mirabilis (strain HI4320).